We begin with the raw amino-acid sequence, 181 residues long: Dual-action ribosomal maturation protein DarP (181 aa).

The tract at residues Met1 to Ser23 is disordered.

This sequence belongs to the DarP family.

Its subcellular location is the cytoplasm. In terms of biological role, member of a network of 50S ribosomal subunit biogenesis factors which assembles along the 30S-50S interface, preventing incorrect 23S rRNA structures from forming. Promotes peptidyl transferase center (PTC) maturation. The chain is Dual-action ribosomal maturation protein DarP from Aeromonas salmonicida (strain A449).